Here is a 439-residue protein sequence, read N- to C-terminus: Methylenetetrahydrofolate--tRNA-(uracil-5-)-methyltransferase TrmFO (439 aa).

8 to 13 contacts FAD; sequence GAGLAG.

It belongs to the MnmG family. TrmFO subfamily. FAD serves as cofactor.

Its subcellular location is the cytoplasm. It carries out the reaction uridine(54) in tRNA + (6R)-5,10-methylene-5,6,7,8-tetrahydrofolate + NADH + H(+) = 5-methyluridine(54) in tRNA + (6S)-5,6,7,8-tetrahydrofolate + NAD(+). The catalysed reaction is uridine(54) in tRNA + (6R)-5,10-methylene-5,6,7,8-tetrahydrofolate + NADPH + H(+) = 5-methyluridine(54) in tRNA + (6S)-5,6,7,8-tetrahydrofolate + NADP(+). In terms of biological role, catalyzes the folate-dependent formation of 5-methyl-uridine at position 54 (M-5-U54) in all tRNAs. In Lacticaseibacillus paracasei (strain ATCC 334 / BCRC 17002 / CCUG 31169 / CIP 107868 / KCTC 3260 / NRRL B-441) (Lactobacillus paracasei), this protein is Methylenetetrahydrofolate--tRNA-(uracil-5-)-methyltransferase TrmFO.